The sequence spans 388 residues: Probable proton-coupled zinc antiporter SLC30A3 (388 aa).

The interval 1–41 (MEPSLATGGSETTRLVSARDRSSAGGGLRLKSLFTEPSEPL) is disordered. Over 1–75 (MEPSLATGGS…SPERVQARRQ (75 aa)) the chain is Cytoplasmic. A phosphoserine mark is found at serine 63 and serine 66. Residues 76–96 (LYAACAVCFIFMAGEVVGGYL) form a helical membrane-spanning segment. Residues 97–105 (AHSLAIMTD) are Lumenal-facing. A helical transmembrane segment spans residues 106-126 (AAHLLADIGSMLASLFSLWLS). The Zn(2+) site is built by histidine 108 and aspartate 112. Topologically, residues 127–145 (TRPATRTMTFGWHRSETLG) are cytoplasmic. A helical membrane pass occupies residues 146–166 (ALASVVSLWIVTGILLYLAFL). At 167–177 (RLLHSDYHIEA) the chain is on the lumenal side. A helical membrane pass occupies residues 178–198 (GAMLLTASIAVCANLLMAFVL). Residues 199 to 235 (HQTGAPHSHGSTGAEYAPLEEGHGYPMSLGNTSVRAA) are Cytoplasmic-facing. Residues 236 to 256 (FVHVLGDLLQSFGVLAASILI) traverse the membrane as a helical segment. Zn(2+)-binding residues include histidine 238 and aspartate 242. At 257–263 (YFKPQYK) the chain is on the lumenal side. Residues 264-284 (VADPISTFLFSICALGSTAPT) form a helical membrane-spanning segment. Topologically, residues 285-388 (LRDVLLVLME…CLRCQEPSQA (104 aa)) are cytoplasmic.

This sequence belongs to the cation diffusion facilitator (CDF) transporter (TC 2.A.4) family. SLC30A subfamily. As to quaternary structure, homodimer. Homodimerization is negligible compared to the human protein. It could explain the lower efficiency of zinc transport. Interacts with TMEM163. As to expression, expression is restricted to brain (at protein level). In the brain, most abundant in hippocampus and cerebral cortex. The mRNA is also detected in testis, expression being restricted to germ cells and highest in pachytene spermatocytes and round spermatids.

The protein localises to the cytoplasmic vesicle. It is found in the secretory vesicle. The protein resides in the synaptic vesicle membrane. It localises to the synapse. Its subcellular location is the synaptosome. The protein localises to the late endosome membrane. It is found in the lysosome membrane. The catalysed reaction is Zn(2+)(in) + 2 H(+)(out) = Zn(2+)(out) + 2 H(+)(in). Probable proton-coupled zinc ion antiporter mediating the import of zinc from cytoplasm into synaptic vesicles and participating to cellular zinc ion homeostasis in the brain. This Mus musculus (Mouse) protein is Probable proton-coupled zinc antiporter SLC30A3.